We begin with the raw amino-acid sequence, 350 residues long: Isopentenyl-diphosphate delta-isomerase (350 aa).

Residue 15–16 (RK) participates in substrate binding. Residues serine 73, 74 to 76 (SMT), serine 104, and asparagine 132 each bind FMN. 104-106 (SQR) is a substrate binding site. Glutamine 167 is a binding site for substrate. Mg(2+) is bound at residue glutamate 168. FMN-binding positions include lysine 199, threonine 229, 279–281 (GLR), and 300–301 (AM).

It belongs to the IPP isomerase type 2 family. As to quaternary structure, homooctamer. Dimer of tetramers. It depends on FMN as a cofactor. NADPH is required as a cofactor. Requires Mg(2+) as cofactor.

It localises to the cytoplasm. It carries out the reaction isopentenyl diphosphate = dimethylallyl diphosphate. Involved in the biosynthesis of isoprenoids. Catalyzes the 1,3-allylic rearrangement of the homoallylic substrate isopentenyl (IPP) to its allylic isomer, dimethylallyl diphosphate (DMAPP). This Nostoc sp. (strain PCC 7120 / SAG 25.82 / UTEX 2576) protein is Isopentenyl-diphosphate delta-isomerase.